Here is a 191-residue protein sequence, read N- to C-terminus: Surfactant protein C (191 aa).

The propeptide occupies 1 to 23 (MDVGSKEVLMESPPDYSAAPRGR). S-palmitoyl cysteine attachment occurs at residues Cys-28 and Cys-29. The propeptide occupies 59 to 191 (HMSQKHTEMV…LCGEVPLYYI (133 aa)). The BRICHOS domain maps to 94-191 (FSFGSTGLVV…LCGEVPLYYI (98 aa)). Cys-121 and Cys-183 are disulfide-bonded.

The protein localises to the secreted. It localises to the extracellular space. It is found in the surface film. Its function is as follows. Pulmonary surfactant associated proteins promote alveolar stability by lowering the surface tension at the air-liquid interface in the peripheral air spaces. This Macaca mulatta (Rhesus macaque) protein is Surfactant protein C (SFTPC).